The following is a 220-amino-acid chain: Protein-L-isoaspartate O-methyltransferase (220 aa).

The active site involves S70.

Belongs to the methyltransferase superfamily. L-isoaspartyl/D-aspartyl protein methyltransferase family.

It is found in the cytoplasm. It carries out the reaction [protein]-L-isoaspartate + S-adenosyl-L-methionine = [protein]-L-isoaspartate alpha-methyl ester + S-adenosyl-L-homocysteine. In terms of biological role, catalyzes the methyl esterification of L-isoaspartyl residues in peptides and proteins that result from spontaneous decomposition of normal L-aspartyl and L-asparaginyl residues. It plays a role in the repair and/or degradation of damaged proteins. This Halorhodospira halophila (strain DSM 244 / SL1) (Ectothiorhodospira halophila (strain DSM 244 / SL1)) protein is Protein-L-isoaspartate O-methyltransferase.